Here is an 832-residue protein sequence, read N- to C-terminus: Adhesin AWP2 (832 aa).

A signal peptide spans 1–25; it reads MRKLPLFMAWKFWLICLYIIKVAST. 16 N-linked (GlcNAc...) asparagine glycosylation sites follow: asparagine 187, asparagine 290, asparagine 372, asparagine 390, asparagine 435, asparagine 448, asparagine 472, asparagine 482, asparagine 507, asparagine 512, asparagine 515, asparagine 534, asparagine 562, asparagine 579, asparagine 695, and asparagine 721. The interval 722–747 is disordered; that stretch reads QTTSPSMHTTSLVGSENGVSAKTVND.

It localises to the secreted. It is found in the cell wall. Mediates cell-substrate adhesion and promotes biofilm formation. This Candida glabrata (strain ATCC 2001 / BCRC 20586 / JCM 3761 / NBRC 0622 / NRRL Y-65 / CBS 138) (Yeast) protein is Adhesin AWP2.